The following is a 1401-amino-acid chain: Kinesin-like protein KIF27 (1401 aa).

One can recognise a Kinesin motor domain in the interval 5 to 341 (PVKVAVRIRP…LKYANRARNI (337 aa)). 84-91 (GQTGSGKT) provides a ligand contact to ATP. Coiled-coil stretches lie at residues 352–413 (ESDR…GYQC) and 489–557 (LAAD…KLNL). Phosphoserine occurs at positions 643, 646, 672, 675, and 704. The segment at 643–662 (SDNSDDEESEGQEKSGTRCR) is disordered. Coiled-coil stretches lie at residues 705-886 (QELN…IQLK), 916-1070 (DHLQ…AAIE), 1118-1154 (NKVV…LESA), and 1190-1219 (EGIM…TSRD). At serine 999 the chain carries Phosphoserine. The span at 1259-1280 (EELKWASRPESMKLSGREREMD) shows a compositional bias: basic and acidic residues. The disordered stretch occupies residues 1259 to 1332 (EELKWASRPE…TETDDNQFTK (74 aa)). Positions 1281–1292 (SSASSLRTQPNP) are enriched in polar residues. Phosphoserine occurs at positions 1367 and 1389.

Belongs to the TRAFAC class myosin-kinesin ATPase superfamily. Kinesin family. KIF27 subfamily. In terms of assembly, interacts with STK36. In terms of tissue distribution, testis, pancreatic islet, germ cell tumors and Jurkat T-cells.

The protein localises to the cytoplasm. It is found in the cytoskeleton. The protein resides in the cell projection. Its subcellular location is the cilium. In terms of biological role, plays an essential role in motile ciliogenesis. The polypeptide is Kinesin-like protein KIF27 (KIF27) (Homo sapiens (Human)).